Here is a 155-residue protein sequence, read N- to C-terminus: Protein U1 (155 aa).

The protein belongs to the nanovirus U1 protein family.

The polypeptide is Protein U1 (DNA-U1) (Cicer arietinum (Chickpea)).